A 196-amino-acid chain; its full sequence is Ras-related protein RabC (196 aa).

13-20 contacts GTP; sequence GESGVGKS. Positions 35–43 match the Effector region motif; sequence FAPTLGVDF. GTP-binding positions include 63–67 and 121–124; these read DTAGQ and NKSD. 2 S-geranylgeranyl cysteine lipidation sites follow: Cys-195 and Cys-196.

This sequence belongs to the small GTPase superfamily. Rab family.

Its subcellular location is the cell membrane. The polypeptide is Ras-related protein RabC (rabC) (Dictyostelium discoideum (Social amoeba)).